The sequence spans 65 residues: Large ribosomal subunit protein uL30 (65 aa).

This sequence belongs to the universal ribosomal protein uL30 family. In terms of assembly, part of the 50S ribosomal subunit.

The chain is Large ribosomal subunit protein uL30 from Rickettsia bellii (strain OSU 85-389).